The sequence spans 208 residues: Glutathione S-transferase 1 (208 aa).

The region spanning 1–80 is the GST N-terminal domain; it reads MDFYYLPGSA…YLVEKYGKTD (80 aa). Residues serine 9, 50-52, and 64-66 each bind glutathione; these read HTI and ESR. Residues 86 to 207 enclose the GST C-terminal domain; sequence CPKKRAVINQ…AGCLEFKKYF (122 aa).

This sequence belongs to the GST superfamily. Theta family. In terms of assembly, homodimer.

The enzyme catalyses RX + glutathione = an S-substituted glutathione + a halide anion + H(+). Functionally, conjugation of reduced glutathione to a wide number of exogenous and endogenous hydrophobic electrophiles. The protein is Glutathione S-transferase 1 (Gst1) of Musca domestica (House fly).